A 917-amino-acid chain; its full sequence is Probable dipeptidyl-aminopeptidase B (917 aa).

The disordered stretch occupies residues methionine 1–proline 78. Residues methionine 1–serine 90 lie on the Cytoplasmic side of the membrane. Residues alanine 16–isoleucine 26 show a composition bias toward basic and acidic residues. The span at aspartate 27 to serine 49 shows a compositional bias: low complexity. Residues arginine 55–aspartate 65 are compositionally biased toward basic and acidic residues. A helical; Signal-anchor for type II membrane protein membrane pass occupies residues valine 91 to leucine 111. Residues leucine 112–glycine 917 lie on the Vacuolar side of the membrane. Asparagine 350 and asparagine 465 each carry an N-linked (GlcNAc...) asparagine glycan. Serine 754 (charge relay system) is an active-site residue. Asparagine 813 is a glycosylation site (N-linked (GlcNAc...) asparagine). Residues aspartate 831 and histidine 864 each act as charge relay system in the active site.

It belongs to the peptidase S9B family.

It localises to the vacuole membrane. It carries out the reaction Release of an N-terminal dipeptide, Xaa-Yaa-|-Zaa-, from a polypeptide, preferentially when Yaa is Pro, provided Zaa is neither Pro nor hydroxyproline.. Type IV dipeptidyl-peptidase which removes N-terminal dipeptides sequentially from polypeptides having unsubstituted N-termini provided that the penultimate residue is proline. The sequence is that of Probable dipeptidyl-aminopeptidase B (DAPB) from Coccidioides posadasii (strain C735) (Valley fever fungus).